The chain runs to 454 residues: tRNA modification GTPase MnmE (454 aa).

(6S)-5-formyl-5,6,7,8-tetrahydrofolate-binding residues include arginine 23, glutamate 80, and lysine 120. The TrmE-type G domain occupies 216–377 (GMKVVIAGKP…LRTHLKQSMG (162 aa)). Position 226 (asparagine 226) interacts with K(+). GTP contacts are provided by residues 226 to 231 (NAGKSS), 245 to 251 (TAIAGTT), 270 to 273 (DTAG), and 335 to 338 (NKAD). Serine 230 serves as a coordination point for Mg(2+). Threonine 245, isoleucine 247, and threonine 250 together coordinate K(+). Residue threonine 251 coordinates Mg(2+). Residue lysine 454 coordinates (6S)-5-formyl-5,6,7,8-tetrahydrofolate.

This sequence belongs to the TRAFAC class TrmE-Era-EngA-EngB-Septin-like GTPase superfamily. TrmE GTPase family. As to quaternary structure, homodimer. Heterotetramer of two MnmE and two MnmG subunits. K(+) is required as a cofactor.

The protein resides in the cytoplasm. Functionally, exhibits a very high intrinsic GTPase hydrolysis rate. Involved in the addition of a carboxymethylaminomethyl (cmnm) group at the wobble position (U34) of certain tRNAs, forming tRNA-cmnm(5)s(2)U34. This Sodalis glossinidius (strain morsitans) protein is tRNA modification GTPase MnmE.